Reading from the N-terminus, the 700-residue chain is Elongation factor G 2 (700 aa).

Residues 8 to 290 enclose the tr-type G domain; sequence ERYRNIGISA…AVIDFLPSPV (283 aa). Residues 17–24, 88–92, and 142–145 each bind GTP; these read AHIDAGKT, DTPGH, and NKMD.

This sequence belongs to the TRAFAC class translation factor GTPase superfamily. Classic translation factor GTPase family. EF-G/EF-2 subfamily.

The protein resides in the cytoplasm. Its function is as follows. Catalyzes the GTP-dependent ribosomal translocation step during translation elongation. During this step, the ribosome changes from the pre-translocational (PRE) to the post-translocational (POST) state as the newly formed A-site-bound peptidyl-tRNA and P-site-bound deacylated tRNA move to the P and E sites, respectively. Catalyzes the coordinated movement of the two tRNA molecules, the mRNA and conformational changes in the ribosome. This Burkholderia mallei (strain ATCC 23344) protein is Elongation factor G 2.